Consider the following 103-residue polypeptide: Large ribosomal subunit protein uL24 (103 aa).

Belongs to the universal ribosomal protein uL24 family. In terms of assembly, part of the 50S ribosomal subunit.

In terms of biological role, one of two assembly initiator proteins, it binds directly to the 5'-end of the 23S rRNA, where it nucleates assembly of the 50S subunit. Functionally, one of the proteins that surrounds the polypeptide exit tunnel on the outside of the subunit. The sequence is that of Large ribosomal subunit protein uL24 from Bacillus cytotoxicus (strain DSM 22905 / CIP 110041 / 391-98 / NVH 391-98).